The following is a 978-amino-acid chain: Macrophage colony-stimulating factor 1 receptor (978 aa).

Residues 1 to 19 (MELGPPLVLLLATVWHGQG) form the signal peptide. The Extracellular segment spans residues 20–515 (APVIEPSGPE…QLPDESLFTP (496 aa)). Ig-like C2-type domains are found at residues 24–104 (EPSG…VKDP), 107–197 (SWNL…KVNR), 204–298 (QIKL…VVES), 299–397 (AYLN…LTLR), and 398–503 (YPPE…SLGQ). 3 disulfides stabilise this stretch: Cys-42/Cys-84, Cys-127/Cys-177, and Cys-224/Cys-278. Asn-45 and Asn-73 each carry an N-linked (GlcNAc...) asparagine glycan. N-linked (GlcNAc...) asparagine glycans are attached at residues Asn-302, Asn-335, Asn-389, Asn-410, Asn-449, Asn-478, and Asn-491. Residues Cys-417 and Cys-483 are joined by a disulfide bond. A helical membrane pass occupies residues 516–536 (VVVACMSVMSLLVLLLLLLLY). Topologically, residues 537–978 (KYKQKPKYQV…LQPNNYQFAC (442 aa)) are cytoplasmic. Residues 540–572 (QKPKYQVRWKIIERYEGNSYTFIDPTQLPYNEK) form a regulatory juxtamembrane domain region. Tyr-544 and Tyr-559 each carry phosphotyrosine; by autocatalysis. Residues 580-914 (LQFGKTLGAG…CFLLQEQARL (335 aa)) form the Protein kinase domain. ATP-binding positions include 586–594 (LGAGAFGKV) and Lys-614. Phosphotyrosine; by autocatalysis is present on residues Tyr-697 and Tyr-706. Ser-711 carries the post-translational modification Phosphoserine. Tyr-721 is modified (phosphotyrosine; by autocatalysis). Asp-776 functions as the Proton acceptor in the catalytic mechanism. Residues 794-816 (DFGLARDIMNDSNYVVKGNARLP) are activation loop. A phosphotyrosine; by autocatalysis mark is found at Tyr-807 and Tyr-921. Residues 921–957 (YANLPSSGGSSGSDSGGGSSGGSSSEPEEESSSEHLA) form a disordered region. Over residues 929 to 941 (GSSGSDSGGGSSG) the composition is skewed to gly residues. At Tyr-974 the chain carries Phosphotyrosine; by autocatalysis.

The protein belongs to the protein kinase superfamily. Tyr protein kinase family. CSF-1/PDGF receptor subfamily. Monomer. Homodimer. Interacts with CSF1 and IL34. Interaction with dimeric CSF1 or IL34 leads to receptor homodimerization. Interacts with INPPL1/SHIP2 and THOC5. Interacts (tyrosine phosphorylated) with PLCG2 (via SH2 domain). Interacts (tyrosine phosphorylated) with PIK3R1 (via SH2 domain). Interacts (tyrosine phosphorylated) with FYN, YES1 and SRC (via SH2 domain). Interacts (tyrosine phosphorylated) with CBL, GRB2 and SLA2. In terms of processing, autophosphorylated in response to CSF1 or IL34 binding. Phosphorylation at Tyr-559 is important for normal down-regulation of signaling by ubiquitination, internalization and degradation. Phosphorylation at Tyr-559 and Tyr-807 is important for interaction with SRC family members, including FYN, YES1 and SRC, and for subsequent activation of these protein kinases. Phosphorylation at Tyr-697 and Tyr-921 is important for interaction with GRB2. Phosphorylation at Tyr-721 is important for interaction with PIK3R1. Phosphorylation at Tyr-721 and Tyr-807 is important for interaction with PLCG2. Phosphorylation at Tyr-974 is important for interaction with CBL. Dephosphorylation by PTPN2 negatively regulates downstream signaling and macrophage differentiation. Ubiquitinated. Becomes rapidly polyubiquitinated after autophosphorylation, leading to its degradation.

Its subcellular location is the cell membrane. It carries out the reaction L-tyrosyl-[protein] + ATP = O-phospho-L-tyrosyl-[protein] + ADP + H(+). With respect to regulation, present in an inactive conformation in the absence of bound ligand. CSF1 or IL34 binding leads to dimerization and activation by autophosphorylation on tyrosine residues. Functionally, tyrosine-protein kinase that acts as a cell-surface receptor for CSF1 and IL34 and plays an essential role in the regulation of survival, proliferation and differentiation of hematopoietic precursor cells, especially mononuclear phagocytes, such as macrophages and monocytes. Promotes the release of pro-inflammatory chemokines in response to IL34 and CSF1, and thereby plays an important role in innate immunity and in inflammatory processes. Plays an important role in the regulation of osteoclast proliferation and differentiation, the regulation of bone resorption, and is required for normal bone and tooth development. Required for normal male and female fertility, and for normal development of milk ducts and acinar structures in the mammary gland during pregnancy. Promotes reorganization of the actin cytoskeleton, regulates formation of membrane ruffles, cell adhesion and cell migration, and promotes cancer cell invasion. Activates several signaling pathways in response to ligand binding, including the ERK1/2 and the JNK pathway. Phosphorylates PIK3R1, PLCG2, GRB2, SLA2 and CBL. Activation of PLCG2 leads to the production of the cellular signaling molecules diacylglycerol and inositol 1,4,5-trisphosphate, that then lead to the activation of protein kinase C family members, especially PRKCD. Phosphorylation of PIK3R1, the regulatory subunit of phosphatidylinositol 3-kinase, leads to activation of the AKT1 signaling pathway. Activated CSF1R also mediates activation of the MAP kinases MAPK1/ERK2 and/or MAPK3/ERK1, and of the SRC family kinases SRC, FYN and YES1. Activated CSF1R transmits signals both via proteins that directly interact with phosphorylated tyrosine residues in its intracellular domain, or via adapter proteins, such as GRB2. Promotes activation of STAT family members STAT3, STAT5A and/or STAT5B. Promotes tyrosine phosphorylation of SHC1 and INPP5D/SHIP-1. Receptor signaling is down-regulated by protein phosphatases, such as INPP5D/SHIP-1, that dephosphorylate the receptor and its downstream effectors, and by rapid internalization of the activated receptor. In the central nervous system, may play a role in the development of microglia macrophages. This is Macrophage colony-stimulating factor 1 receptor (Csf1r) from Rattus norvegicus (Rat).